We begin with the raw amino-acid sequence, 833 residues long: CUB domain-containing protein 1 (833 aa).

The N-terminal stretch at 1–29 (MAHSACGFSVALLGALLLGTARLLRGTEA) is a signal peptide. The Extracellular segment spans residues 30–666 (SEIALPQRSG…VTLTPRTVDL (637 aa)). N-linked (GlcNAc...) asparagine glycosylation is found at N122, N180, N205, N270, N310, N342, and N386. One can recognise a CUB domain in the interval 417–540 (CLDHRYCYRQ…QGLIVSYTPY (124 aa)). The cysteines at positions 476 and 499 are disulfide-linked. A helical membrane pass occupies residues 667 to 687 (AVVIGAAGGGALLLFALVLII). Residues 688–833 (CFVKKKKKVD…HTQGPVETEE (146 aa)) lie on the Cytoplasmic side of the membrane. Y731 carries the phosphotyrosine modification. Residues 783–833 (AKFTAEELAPSSPPESESEPYTFSHPNKGEIGVRETDIPLLHTQGPVETEE) form a disordered region. Residues 809 to 819 (NKGEIGVRETD) are compositionally biased toward basic and acidic residues.

In terms of assembly, interacts with CDH2/N-cadherin, CDH3/P-cadherin, SDC1/syndecan-1, SDC4/syndecan-4 and the serine protease ST14/MT-SP1. Also interacts SRC and PRKCG/protein kinase C gamma. In terms of processing, phosphorylated on tyrosine by kinases of the SRC family such as SRC and YES as well as by the protein kinase C gamma/PRKCG. Dephosphorylated by phosphotyrosine phosphatases. Also phosphorylated by suramin, a heparin analog. Tyrosine phosphorylated in response to dissociation of integrin alpha-6 beta-4 from laminin-5. N-glycosylated. Post-translationally, a soluble form may also be produced by proteolytic cleavage at the cell surface (shedding). Another peptide of 80 kDa (p80) is present in cultured keratinocytes probably due to tryptic cleavage at an unidentified site on the N-terminal side. Converted to p80 by plasmin, a trypsin-like protease.

The protein localises to the cell membrane. In terms of biological role, may be involved in cell adhesion and cell matrix association. May play a role in the regulation of anchorage versus migration or proliferation versus differentiation via its phosphorylation. May be a novel marker for leukemia diagnosis and for immature hematopoietic stem cell subsets. Belongs to the tetraspanin web involved in tumor progression and metastasis. The polypeptide is CUB domain-containing protein 1 (Cdcp1) (Mus musculus (Mouse)).